Here is a 206-residue protein sequence, read N- to C-terminus: MILSDKDIFDYVNSKRVLIEPFNSKFVGPCSYDVTLGSEFIKYKDDVYDLKKNLSHNKFEIENSIMVCPLNHHLDETIIENYKEKYNVDCVVSGGLLGTTNEYVELPNDVCAQYQGRSSFGRVFLQTHQTAGWIDSGFKGKITLEIVAYDKPVILYKNQRVGQLIFSKTLSPADIGYSDRKCSKYAGQKSVMASLIKKDFEIDEEE.

DCTP-binding positions include 117–122 (RSSFGR), D135, 143–145 (TLE), Q163, Y177, K184, and Q188. The active-site Proton donor/acceptor is the E145.

This sequence belongs to the dCTP deaminase family. Homotrimer.

It catalyses the reaction dCTP + 2 H2O = dUMP + NH4(+) + diphosphate. The protein operates within pyrimidine metabolism; dUMP biosynthesis; dUMP from dCTP: step 1/1. Its function is as follows. Bifunctional enzyme that catalyzes both the deamination of dCTP to dUTP and the hydrolysis of dUTP to dUMP without releasing the toxic dUTP intermediate. The protein is dCTP deaminase, dUMP-forming of Methanococcus maripaludis (strain C6 / ATCC BAA-1332).